The chain runs to 267 residues: 4-hydroxy-tetrahydrodipicolinate reductase (267 aa).

Residues 8–13 (GAAGRM) and aspartate 34 each bind NAD(+). Residue arginine 35 coordinates NADP(+). Residues 98 to 100 (GTT) and 122 to 125 (AANF) contribute to the NAD(+) site. Residue histidine 155 is the Proton donor/acceptor of the active site. Residue histidine 156 coordinates (S)-2,3,4,5-tetrahydrodipicolinate. The Proton donor role is filled by lysine 159. A (S)-2,3,4,5-tetrahydrodipicolinate-binding site is contributed by 165-166 (GT).

The protein belongs to the DapB family.

The protein localises to the cytoplasm. It catalyses the reaction (S)-2,3,4,5-tetrahydrodipicolinate + NAD(+) + H2O = (2S,4S)-4-hydroxy-2,3,4,5-tetrahydrodipicolinate + NADH + H(+). The enzyme catalyses (S)-2,3,4,5-tetrahydrodipicolinate + NADP(+) + H2O = (2S,4S)-4-hydroxy-2,3,4,5-tetrahydrodipicolinate + NADPH + H(+). It participates in amino-acid biosynthesis; L-lysine biosynthesis via DAP pathway; (S)-tetrahydrodipicolinate from L-aspartate: step 4/4. Its function is as follows. Catalyzes the conversion of 4-hydroxy-tetrahydrodipicolinate (HTPA) to tetrahydrodipicolinate. The sequence is that of 4-hydroxy-tetrahydrodipicolinate reductase from Ectopseudomonas mendocina (strain ymp) (Pseudomonas mendocina).